We begin with the raw amino-acid sequence, 174 residues long: Large ribosomal subunit protein uL10 (174 aa).

This sequence belongs to the universal ribosomal protein uL10 family. Part of the ribosomal stalk of the 50S ribosomal subunit. The N-terminus interacts with L11 and the large rRNA to form the base of the stalk. The C-terminus forms an elongated spine to which L12 dimers bind in a sequential fashion forming a multimeric L10(L12)X complex.

Forms part of the ribosomal stalk, playing a central role in the interaction of the ribosome with GTP-bound translation factors. This is Large ribosomal subunit protein uL10 from Synechococcus sp. (strain RCC307).